Consider the following 344-residue polypeptide: N-acetyl-gamma-glutamyl-phosphate reductase 1 (344 aa).

Residue Cys-150 is part of the active site.

This sequence belongs to the NAGSA dehydrogenase family. Type 1 subfamily.

The protein localises to the cytoplasm. It carries out the reaction N-acetyl-L-glutamate 5-semialdehyde + phosphate + NADP(+) = N-acetyl-L-glutamyl 5-phosphate + NADPH + H(+). The protein operates within amino-acid biosynthesis; L-arginine biosynthesis; N(2)-acetyl-L-ornithine from L-glutamate: step 3/4. Its function is as follows. Catalyzes the NADPH-dependent reduction of N-acetyl-5-glutamyl phosphate to yield N-acetyl-L-glutamate 5-semialdehyde. The sequence is that of N-acetyl-gamma-glutamyl-phosphate reductase 1 from Pseudomonas putida (strain ATCC 47054 / DSM 6125 / CFBP 8728 / NCIMB 11950 / KT2440).